The following is a 611-amino-acid chain: Polyphenol oxidase 4 (611 aa).

6 residues coordinate Cu cation: His-57, His-82, His-91, His-251, His-255, and His-283. The 2'-(S-cysteinyl)-histidine (Cys-His) cross-link spans 80–82 (CTH). Residue His-255 coordinates substrate. Residues 380 to 611 (IKKSEGGKNP…GGLGALGRIF (232 aa)) constitute a propeptide, removed in mature form.

The protein belongs to the tyrosinase family. As to quaternary structure, heterotetramer. Cu(2+) is required as a cofactor. Post-translationally, the C-ter is probably cleaved after Gly-379 since the mature active protein is smaller than the protein encoded by the gene.

The catalysed reaction is 2 L-dopa + O2 = 2 L-dopaquinone + 2 H2O. It catalyses the reaction L-tyrosine + O2 = L-dopaquinone + H2O. Functionally, copper-containing oxidase that catalyzes both the o-hydroxylation of monophenols and the subsequent oxidation of the resulting o-diphenols into reactive o-quinones, which evolve spontaneously to produce intermediates, which associate in dark brown pigments. Involved in the initial step of melanin synthesis. Melanins constitute a mechanism of defense and resistance to stress such as UV radiations, free radicals, gamma rays, dehydratation and extreme temperatures, and contribute to the fungal cell-wall resistance against hydrolytic enzymes in avoiding cellular lysis. Fungal pigments are also involved in the formation and stability of spores. In Agaricus bisporus (White button mushroom), this protein is Polyphenol oxidase 4 (PPO4).